Consider the following 487-residue polypeptide: L-tartrate/succinate antiporter (487 aa).

14 consecutive transmembrane segments (helical) span residues 10–30 (YLAP…AGLE), 33–53 (TWLY…EPVP), 54–74 (GAVV…WLLF), 93–113 (WAVS…FMFG), 137–157 (TLFL…VTPS), 189–209 (IGSY…AIFL), 230–250 (LSWG…VLLV), 292–312 (LMVG…AAMV), 313–333 (GYSV…DIVS), 340–360 (VFFW…TGFI), 370–390 (SLSG…FYLL), 393–413 (FFAS…AAAL), 418–438 (IPLP…SILT), and 465–485 (IFGL…MPVV).

Belongs to the SLC13A/DASS transporter (TC 2.A.47) family. DIT1 subfamily.

Its subcellular location is the cell inner membrane. The catalysed reaction is (2R,3R)-tartrate(out) + succinate(in) = (2R,3R)-tartrate(in) + succinate(out). In terms of biological role, catalyzes the uptake of tartrate in exchange for intracellular succinate. Essential for anaerobic L-tartrate fermentation. In Shigella dysenteriae serotype 1 (strain Sd197), this protein is L-tartrate/succinate antiporter (ttdT).